Reading from the N-terminus, the 251-residue chain is Vitamin B12 import ATP-binding protein BtuD (251 aa).

The region spanning 2-236 is the ABC transporter domain; the sequence is IRVNSLQVDS…EVLQSVFGTS (235 aa). 30–37 contacts ATP; the sequence is GPNGCGKS.

The protein belongs to the ABC transporter superfamily. Vitamin B12 importer (TC 3.A.1.13.1) family. The complex is composed of two ATP-binding proteins (BtuD), two transmembrane proteins (BtuC) and a solute-binding protein (BtuF).

It is found in the cell inner membrane. It catalyses the reaction an R-cob(III)alamin(out) + ATP + H2O = an R-cob(III)alamin(in) + ADP + phosphate + H(+). Part of the ABC transporter complex BtuCDF involved in vitamin B12 import. Responsible for energy coupling to the transport system. The polypeptide is Vitamin B12 import ATP-binding protein BtuD (Vibrio cholerae serotype O1 (strain ATCC 39315 / El Tor Inaba N16961)).